Consider the following 287-residue polypeptide: PIH1 domain-containing protein 1 (287 aa).

The protein belongs to the PIH1 family.

It is found in the nucleus. In terms of biological role, involved in the assembly of C/D box small nucleolar ribonucleoprotein (snoRNP) particles. Recruits the SWI/SNF complex to the core promoter of rRNA genes and enhances pre-rRNA transcription. Mediates interaction of TELO2 with the R2TP complex which is necessary for the stability of MTOR and SMG1. Positively regulates the assembly and activity of the mTORC1 complex. The polypeptide is PIH1 domain-containing protein 1 (pih1d1) (Danio rerio (Zebrafish)).